The primary structure comprises 415 residues: G patch domain-containing protein 4 (415 aa).

Met1 is subject to N-acetylmethionine. The residue at position 4 (Thr4) is a Phosphothreonine. Residues 11 to 57 (GMKFAEEQLLKHGWTQGKGLGRRENGITQALKVTLKQDNHGVGHDPA) form the G-patch domain. Lys46 is covalently cross-linked (Glycyl lysine isopeptide (Lys-Gly) (interchain with G-Cter in SUMO2)). At Thr116 the chain carries Phosphothreonine. Disordered regions lie at residues 116–141 (TSGE…TPPK) and 191–415 (LGTS…VDLS). The segment covering 118–141 (GEEKPDRDLGNCSDVDNHEPTPPK) has biased composition (basic and acidic residues). Residue Ser130 is modified to Phosphoserine. Over residues 191 to 201 (LGTSQPLTDSE) the composition is skewed to polar residues. Over residues 224–239 (SLGDELLGHTDRSFRD) the composition is skewed to basic and acidic residues. Residue Ser258 is modified to Phosphoserine. Over residues 335–345 (EDLDTQEEEGK) the composition is skewed to acidic residues. Over residues 353–364 (RKVRRKDKRKRQ) the composition is skewed to basic residues. Over residues 387–397 (AGERSRQYPKE) the composition is skewed to basic and acidic residues. A compositionally biased stretch (basic residues) spans 398-407 (RAKKKKRKRD).

This Mus musculus (Mouse) protein is G patch domain-containing protein 4 (Gpatch4).